Here is a 310-residue protein sequence, read N- to C-terminus: GPN-loop GTPase 2 (310 aa).

Residue Ala2 is modified to N-acetylalanine. 19 to 24 is a binding site for GTP; the sequence is GSGKTT. Positions 76–78 match the Gly-Pro-Asn (GPN)-loop; involved in dimer interface motif; the sequence is GPN. GTP is bound at residue 178–181; the sequence is SKMD.

Belongs to the GPN-loop GTPase family. As to quaternary structure, heterodimers with GPN1 or GPN3. Binds to RNA polymerase II (RNAPII).

In terms of biological role, small GTPase required for proper localization of RNA polymerase II and III (RNAPII and RNAPIII). May act at an RNAP assembly step prior to nuclear import. The sequence is that of GPN-loop GTPase 2 from Homo sapiens (Human).